The sequence spans 721 residues: ATP-dependent zinc metalloprotease FtsH (721 aa).

Residues 1 to 44 (MYFLKKIVNLFSSKIESEDNNVKKDDLTQPRKQSPEARKRRNRR) are Cytoplasmic-facing. The helical transmembrane segment at 45–65 (IIFWLIILLIIGTIIGVIIYF) threads the bilayer. Residues 66–190 (SVRKEYDNVI…AGIPSSGFNP (125 aa)) are Extracellular-facing. A helical membrane pass occupies residues 191–211 (QVIISPLISIIFFIIFLYIIL). The Cytoplasmic portion of the chain corresponds to 212–721 (RVSKAQSDSL…KDKEKDQKSN (510 aa)). Position 279–286 (279–286 (GPPGTGKT)) interacts with ATP. Zn(2+) is bound at residue histidine 498. Glutamate 499 is a catalytic residue. Zn(2+) is bound by residues histidine 502 and aspartate 577. The tract at residues 686–721 (NKREASQKQANSSVEEAKVVDDEESIKDKEKDQKSN) is disordered. Residues 700 to 721 (EEAKVVDDEESIKDKEKDQKSN) are compositionally biased toward basic and acidic residues.

It in the central section; belongs to the AAA ATPase family. In the C-terminal section; belongs to the peptidase M41 family. Homohexamer. Zn(2+) is required as a cofactor.

The protein resides in the cell membrane. In terms of biological role, acts as a processive, ATP-dependent zinc metallopeptidase for both cytoplasmic and membrane proteins. Plays a role in the quality control of integral membrane proteins. This is ATP-dependent zinc metalloprotease FtsH from Ureaplasma parvum serovar 3 (strain ATCC 27815 / 27 / NCTC 11736).